Here is a 640-residue protein sequence, read N- to C-terminus: DNA mismatch repair protein MutL (640 aa).

Disordered regions lie at residues 332 to 353 and 408 to 431; these read PNVQVEEKPDSPRPTGESFNFP and PAHTEASLTPPKQAEPEGNPTFHD.

This sequence belongs to the DNA mismatch repair MutL/HexB family.

This protein is involved in the repair of mismatches in DNA. It is required for dam-dependent methyl-directed DNA mismatch repair. May act as a 'molecular matchmaker', a protein that promotes the formation of a stable complex between two or more DNA-binding proteins in an ATP-dependent manner without itself being part of a final effector complex. The sequence is that of DNA mismatch repair protein MutL from Chloroherpeton thalassium (strain ATCC 35110 / GB-78).